The chain runs to 156 residues: Ribosomal RNA large subunit methyltransferase H (156 aa).

S-adenosyl-L-methionine is bound by residues glycine 104 and 123 to 128 (LSALTL).

Belongs to the RNA methyltransferase RlmH family. Homodimer.

It localises to the cytoplasm. The catalysed reaction is pseudouridine(1915) in 23S rRNA + S-adenosyl-L-methionine = N(3)-methylpseudouridine(1915) in 23S rRNA + S-adenosyl-L-homocysteine + H(+). Functionally, specifically methylates the pseudouridine at position 1915 (m3Psi1915) in 23S rRNA. In Nitrosospira multiformis (strain ATCC 25196 / NCIMB 11849 / C 71), this protein is Ribosomal RNA large subunit methyltransferase H.